The primary structure comprises 143 residues: Ribosome maturation factor RimP (143 aa).

The protein belongs to the RimP family.

It is found in the cytoplasm. Its function is as follows. Required for maturation of 30S ribosomal subunits. The protein is Ribosome maturation factor RimP of Borrelia recurrentis (strain A1).